The primary structure comprises 31 residues: uncharacterized protein (31 aa).

This is an uncharacterized protein from Archaeoglobus fulgidus (strain ATCC 49558 / DSM 4304 / JCM 9628 / NBRC 100126 / VC-16).